We begin with the raw amino-acid sequence, 455 residues long: Neuronal acetylcholine receptor subunit beta-3 (455 aa).

The signal sequence occupies residues Met-1–Gly-20. At Ser-21–Leu-229 the chain is on the extracellular side. N-linked (GlcNAc...) asparagine glycans are attached at residues Asn-48 and Asn-163. An intrachain disulfide couples Cys-150 to Cys-164. A run of 3 helical transmembrane segments spans residues Pro-230 to Leu-254, Leu-262 to Ile-279, and Tyr-296 to Val-317. Residues His-318 to Arg-425 are Cytoplasmic-facing. A helical membrane pass occupies residues Ile-426–Thr-444.

The protein belongs to the ligand-gated ion channel (TC 1.A.9) family. Acetylcholine receptor (TC 1.A.9.1) subfamily. Beta-3/CHRNB3 sub-subfamily. In terms of assembly, neuronal AChR seems to be composed of two different type of subunits: alpha and beta. CHRNB3/beta-3 subunit is only able to form functional nAChRs when co-assembled with another beta subunit. Participates in pentameric assemblies along with CHRNA4/alpha-4 and CHRNB2/beta-2 subunits and with CHRNA6/alpha-6 as well, forming stoichiometries such as (CHRNA3:CHRNB4)2:CHRNB3, (CHRNA4:CHRNB2)2:CHRNB3 or (CHRNA6:CHRNB2)2:CHRNB3. Relatively abundant in the developing retina and in the trigeminal ganglion.

The protein resides in the synaptic cell membrane. It is found in the cell membrane. It carries out the reaction Ca(2+)(in) = Ca(2+)(out). The enzyme catalyses K(+)(in) = K(+)(out). It catalyses the reaction Na(+)(in) = Na(+)(out). With respect to regulation, activated by a myriad of ligands such as acetylcholine, cytisine, nicotine, choline and epibatidine. Component of neuronal acetylcholine receptors (nAChRs) that function as pentameric, ligand-gated cation channels with high calcium permeability among other activities. nAChRs are excitatory neurotrasnmitter receptors formed by a collection of nAChR subunits known to mediate synaptic transmission in the nervous system and the neuromuscular junction. Each nAchR subunit confers differential attributes to channel properties, including activation, deactivation and desensitization kinetics, pH sensitivity, cation permeability, and binding to allosteric modulators. Has an accessory rather than functional role and is only able to form functional nAChRs when co-assembled with another beta subunit. Participates in pentameric assemblies along with CHRNA3, CHRNA4, CHRNA6, CHRNB2 and CHRNB4. Modulates receptor assembly and increases receptor sensitivity to nicotine when associated with CHRNB2, CHRNA4 and/or CHRNA6 as well as CHRNA3 and CHRNB4. Seems to play a role in nicotine addiction. The polypeptide is Neuronal acetylcholine receptor subunit beta-3 (CHRNB3) (Gallus gallus (Chicken)).